The chain runs to 129 residues: Small ribosomal subunit protein uS11 (129 aa).

The protein belongs to the universal ribosomal protein uS11 family. Part of the 30S ribosomal subunit. Interacts with proteins S7 and S18. Binds to IF-3.

Functionally, located on the platform of the 30S subunit, it bridges several disparate RNA helices of the 16S rRNA. Forms part of the Shine-Dalgarno cleft in the 70S ribosome. This chain is Small ribosomal subunit protein uS11, found in Lactobacillus delbrueckii subsp. bulgaricus (strain ATCC 11842 / DSM 20081 / BCRC 10696 / JCM 1002 / NBRC 13953 / NCIMB 11778 / NCTC 12712 / WDCM 00102 / Lb 14).